Consider the following 682-residue polypeptide: DNA ligase (682 aa).

Residues 42 to 46 (DAEYD), 91 to 92 (SL), and Glu124 contribute to the NAD(+) site. Lys126 acts as the N6-AMP-lysine intermediate in catalysis. Positions 147, 184, 302, and 326 each coordinate NAD(+). Zn(2+) contacts are provided by Cys420, Cys423, Cys438, and Cys444. The BRCT domain occupies 603 to 682 (IADNPLKGKS…QEFIALTGEN (80 aa)).

It belongs to the NAD-dependent DNA ligase family. LigA subfamily. Requires Mg(2+) as cofactor. The cofactor is Mn(2+).

It carries out the reaction NAD(+) + (deoxyribonucleotide)n-3'-hydroxyl + 5'-phospho-(deoxyribonucleotide)m = (deoxyribonucleotide)n+m + AMP + beta-nicotinamide D-nucleotide.. DNA ligase that catalyzes the formation of phosphodiester linkages between 5'-phosphoryl and 3'-hydroxyl groups in double-stranded DNA using NAD as a coenzyme and as the energy source for the reaction. It is essential for DNA replication and repair of damaged DNA. The polypeptide is DNA ligase (Actinobacillus pleuropneumoniae serotype 7 (strain AP76)).